Reading from the N-terminus, the 131-residue chain is Arsenate reductase 2 (131 aa).

Residues Cys-10, Cys-82, and Cys-89 each act as nucleophile in the active site. Disulfide bonds link Cys-10/Cys-82 and Cys-82/Cys-89.

This sequence belongs to the low molecular weight phosphotyrosine protein phosphatase family. Thioredoxin-coupled ArsC subfamily.

Its subcellular location is the cytoplasm. The enzyme catalyses arsenate + [thioredoxin]-dithiol + H(+) = arsenite + [thioredoxin]-disulfide + H2O. Its function is as follows. Catalyzes the reduction of arsenate [As(V)] to arsenite [As(III)]. The chain is Arsenate reductase 2 from Staphylococcus epidermidis (strain ATCC 35984 / DSM 28319 / BCRC 17069 / CCUG 31568 / BM 3577 / RP62A).